A 305-amino-acid chain; its full sequence is Glutaminase (305 aa).

Positions 61, 113, 158, 165, 189, 241, and 259 each coordinate substrate.

It belongs to the glutaminase family. Homotetramer.

It carries out the reaction L-glutamine + H2O = L-glutamate + NH4(+). The protein is Glutaminase of Clostridium botulinum (strain ATCC 19397 / Type A).